The primary structure comprises 208 residues: F-box/kelch-repeat protein At2g43270 (208 aa).

The region spanning 1–44 (MIYVVPDLLEEIFLGLPLKSILRFKTVSKQWRSILESKSFAERR) is the F-box domain. One copy of the Kelch repeat lies at 149–200 (RDKFNGSYKVVRMCFSPVEKCEVLDVETGEWSELNPPPNDIDVGRKSVCVNG).

This chain is F-box/kelch-repeat protein At2g43270, found in Arabidopsis thaliana (Mouse-ear cress).